The chain runs to 328 residues: Palmitoyltransferase ZDHHC15A (328 aa).

Residues 1 to 14 (MLLPACLRRCARLL) are Cytoplasmic-facing. The chain crosses the membrane as a helical span at residues 15–35 (FWIPVLVVIVVVMWSYYAYVV). Topologically, residues 36 to 48 (HFCWILLSSATQR) are lumenal. The chain crosses the membrane as a helical span at residues 49 to 69 (VVFLCLFHLCFGMFSWSFWKA). Residues 70–166 (VSTPPSSPSV…NNCMGFSNYK (97 aa)) lie on the Cytoplasmic side of the membrane. Residues 123-173 (RFCHHCQLIKPDRCHHCSVCQTCVLKMDHHCLWLNNCMGFSNYKFFMLFLL) form the DHHC domain. Positions 125 and 128 each coordinate Zn(2+). Lysine 132 lines the substrate pocket. The Zn(2+) site is built by histidine 138, cysteine 139, cysteine 142, cysteine 145, and histidine 152. Cysteine 153 acts as the S-palmitoyl cysteine intermediate in catalysis. Cysteine 159 is a Zn(2+) binding site. Residues 167 to 187 (FFMLFLLYSLLYCLLIVSTVT) form a helical membrane-spanning segment. Residues 188 to 206 (PTVIQLWRGRLFDSCVKLH) are Lumenal-facing. The helical transmembrane segment at 207-227 (VLFLTLVSAIFAITLCFLLIF) threads the bilayer. At 228 to 328 (HIWLLTSNKT…KEAAVTIAVD (101 aa)) the chain is on the cytoplasmic side.

It belongs to the DHHC palmitoyltransferase family. In terms of processing, autopalmitoylated (in vitro).

Its subcellular location is the golgi apparatus membrane. It is found in the postsynaptic density. It carries out the reaction L-cysteinyl-[protein] + hexadecanoyl-CoA = S-hexadecanoyl-L-cysteinyl-[protein] + CoA. It catalyses the reaction L-cysteinyl-[protein] + tetradecanoyl-CoA = S-tetradecanoyl-L-cysteinyl-[protein] + CoA. The enzyme catalyses L-cysteinyl-[protein] + octadecanoyl-CoA = S-octadecanoyl-L-cysteinyl-[protein] + CoA. In terms of biological role, palmitoyltransferase that catalyzes the addition of palmitate onto various protein substrates. Has no stringent fatty acid selectivity and in addition to palmitate can also transfer onto target proteins myristate from tetradecanoyl-CoA and stearate from octadecanoyl-CoA. May thereby regulate target proteins association and localization to membranes. This is Palmitoyltransferase ZDHHC15A (zdhhc15a) from Danio rerio (Zebrafish).